Here is a 575-residue protein sequence, read N- to C-terminus: UvrABC system protein C (575 aa).

Positions A15–V90 constitute a GIY-YIG domain. The UVR domain occupies G198–F233.

This sequence belongs to the UvrC family. Interacts with UvrB in an incision complex.

It localises to the cytoplasm. The UvrABC repair system catalyzes the recognition and processing of DNA lesions. UvrC both incises the 5' and 3' sides of the lesion. The N-terminal half is responsible for the 3' incision and the C-terminal half is responsible for the 5' incision. The sequence is that of UvrABC system protein C from Natronomonas pharaonis (strain ATCC 35678 / DSM 2160 / CIP 103997 / JCM 8858 / NBRC 14720 / NCIMB 2260 / Gabara) (Halobacterium pharaonis).